Reading from the N-terminus, the 296-residue chain is Putative methyltransferase HI_1523 (296 aa).

Belongs to the N(4)/N(6)-methyltransferase family.

The chain is Putative methyltransferase HI_1523 from Haemophilus influenzae (strain ATCC 51907 / DSM 11121 / KW20 / Rd).